Reading from the N-terminus, the 638-residue chain is Plasma kallikrein (638 aa).

An N-terminal signal peptide occupies residues 1 to 19 (MILFKQVGYFVSLFATVSC). 4 consecutive Apple domains span residues 21 to 104 (CLSQ…LKQC), 111 to 194 (CHQD…LKSC), 201 to 284 (CPMD…LFTC), and 292 to 375 (CHFK…LRLC). 18 disulfide bridges follow: C21–C104, C47–C77, C51–C57, C111–C194, C137–C166, C141–C147, C201–C284, C227–C256, C231–C237, C292–C375, C318–C347, C322–C328, C340–C345, C383–C503, C419–C435, C517–C584, C548–C563, and C574–C602. N-linked (GlcNAc...) asparagine glycosylation occurs at N127. N-linked (GlcNAc...) asparagine glycosylation is present at N215. N-linked (GlcNAc...) asparagine glycosylation is present at N308. Residues 391 to 626 (IVGGTNSSLG…YIDWILEKIQ (236 aa)) enclose the Peptidase S1 domain. N396 carries N-linked (GlcNAc...) asparagine glycosylation. The active-site Charge relay system is H434. A glycan (N-linked (GlcNAc...) asparagine) is linked at N453. The Charge relay system role is filled by D483. N-linked (GlcNAc...) asparagine glycosylation is present at N494. The Charge relay system role is filled by S578.

It belongs to the peptidase S1 family. Plasma kallikrein subfamily. As to quaternary structure, forms a heterodimer with SERPINA5. The zymogen is activated by factor XIIa, which cleaves the molecule into a light chain, which contains the active site, and a heavy chain, which associates with HMW kininogen. These chains are linked by one or more disulfide bonds.

It is found in the secreted. The catalysed reaction is Cleaves selectively Arg-|-Xaa and Lys-|-Xaa bonds, including Lys-|-Arg and Arg-|-Ser bonds in (human) kininogen to release bradykinin.. With respect to regulation, inhibited by SERPINA5. The enzyme cleaves Lys-Arg and Arg-Ser bonds. It activates, in a reciprocal reaction, factor XII after its binding to a negatively charged surface. It also releases bradykinin from HMW kininogen and may also play a role in the renin-angiotensin system by converting prorenin into renin. In Rattus norvegicus (Rat), this protein is Plasma kallikrein (Klkb1).